Consider the following 212-residue polypeptide: Dephospho-CoA kinase (212 aa).

The DPCK domain maps to 3 to 204 (ILGLTGSIGM…GSRPAAPVGG (202 aa)). Residue 11-16 (GMGKST) participates in ATP binding.

This sequence belongs to the CoaE family.

It localises to the cytoplasm. It catalyses the reaction 3'-dephospho-CoA + ATP = ADP + CoA + H(+). It participates in cofactor biosynthesis; coenzyme A biosynthesis; CoA from (R)-pantothenate: step 5/5. Functionally, catalyzes the phosphorylation of the 3'-hydroxyl group of dephosphocoenzyme A to form coenzyme A. This is Dephospho-CoA kinase from Paramagnetospirillum magneticum (strain ATCC 700264 / AMB-1) (Magnetospirillum magneticum).